We begin with the raw amino-acid sequence, 738 residues long: Phosphoribosylformylglycinamidine synthase subunit PurL (738 aa).

Residue His53 is part of the active site. The ATP site is built by Tyr56 and Lys95. Glu97 provides a ligand contact to Mg(2+). Residues 98 to 101 and Arg120 each bind substrate; that span reads SHNH. The active-site Proton acceptor is His99. Residue Asp121 coordinates Mg(2+). Gln244 lines the substrate pocket. Position 274 (Asp274) interacts with Mg(2+). 318–320 provides a ligand contact to substrate; the sequence is ESQ. Asp499 and Gly536 together coordinate ATP. Asn537 lines the Mg(2+) pocket. Ser539 contributes to the substrate binding site.

Belongs to the FGAMS family. As to quaternary structure, monomer. Part of the FGAM synthase complex composed of 1 PurL, 1 PurQ and 2 PurS subunits.

The protein resides in the cytoplasm. It carries out the reaction N(2)-formyl-N(1)-(5-phospho-beta-D-ribosyl)glycinamide + L-glutamine + ATP + H2O = 2-formamido-N(1)-(5-O-phospho-beta-D-ribosyl)acetamidine + L-glutamate + ADP + phosphate + H(+). The protein operates within purine metabolism; IMP biosynthesis via de novo pathway; 5-amino-1-(5-phospho-D-ribosyl)imidazole from N(2)-formyl-N(1)-(5-phospho-D-ribosyl)glycinamide: step 1/2. Part of the phosphoribosylformylglycinamidine synthase complex involved in the purines biosynthetic pathway. Catalyzes the ATP-dependent conversion of formylglycinamide ribonucleotide (FGAR) and glutamine to yield formylglycinamidine ribonucleotide (FGAM) and glutamate. The FGAM synthase complex is composed of three subunits. PurQ produces an ammonia molecule by converting glutamine to glutamate. PurL transfers the ammonia molecule to FGAR to form FGAM in an ATP-dependent manner. PurS interacts with PurQ and PurL and is thought to assist in the transfer of the ammonia molecule from PurQ to PurL. The polypeptide is Phosphoribosylformylglycinamidine synthase subunit PurL (Lacticaseibacillus paracasei (strain ATCC 334 / BCRC 17002 / CCUG 31169 / CIP 107868 / KCTC 3260 / NRRL B-441) (Lactobacillus paracasei)).